Reading from the N-terminus, the 236-residue chain is Uridylate kinase (236 aa).

Residue 8-11 (KLSG) participates in ATP binding. Residues 16–21 (GEQGYG) form an involved in allosteric activation by GTP region. 2 residues coordinate ATP: Gly-51 and Arg-55. Residues Asp-70 and 131–138 (TGNPYFST) each bind UMP. ATP contacts are provided by Asn-159, Tyr-165, and Asp-168.

Belongs to the UMP kinase family. Homohexamer.

The protein localises to the cytoplasm. It carries out the reaction UMP + ATP = UDP + ADP. It functions in the pathway pyrimidine metabolism; CTP biosynthesis via de novo pathway; UDP from UMP (UMPK route): step 1/1. With respect to regulation, allosterically activated by GTP. Inhibited by UTP. Its function is as follows. Catalyzes the reversible phosphorylation of UMP to UDP. In Shouchella clausii (strain KSM-K16) (Alkalihalobacillus clausii), this protein is Uridylate kinase.